Consider the following 59-residue polypeptide: MITTLTCPRCRAETVWEGNPHRPFCSARCKTVDLAAWADEEYRIAGPEAPSDNDENDRE.

Positions 7, 10, 25, and 29 each coordinate Zn(2+).

It belongs to the DNA gyrase inhibitor YacG family. Interacts with GyrB. The cofactor is Zn(2+).

Its function is as follows. Inhibits all the catalytic activities of DNA gyrase by preventing its interaction with DNA. Acts by binding directly to the C-terminal domain of GyrB, which probably disrupts DNA binding by the gyrase. The chain is DNA gyrase inhibitor YacG from Geobacter sulfurreducens (strain ATCC 51573 / DSM 12127 / PCA).